Here is a 362-residue protein sequence, read N- to C-terminus: Phosphoserine aminotransferase (362 aa).

R42 provides a ligand contact to L-glutamate. W102, T154, D174, and Q197 together coordinate pyridoxal 5'-phosphate. The residue at position 198 (K198) is an N6-(pyridoxal phosphate)lysine. 239–240 (NT) provides a ligand contact to pyridoxal 5'-phosphate.

This sequence belongs to the class-V pyridoxal-phosphate-dependent aminotransferase family. SerC subfamily. In terms of assembly, homodimer. Pyridoxal 5'-phosphate serves as cofactor.

It is found in the cytoplasm. It catalyses the reaction O-phospho-L-serine + 2-oxoglutarate = 3-phosphooxypyruvate + L-glutamate. The catalysed reaction is 4-(phosphooxy)-L-threonine + 2-oxoglutarate = (R)-3-hydroxy-2-oxo-4-phosphooxybutanoate + L-glutamate. It participates in amino-acid biosynthesis; L-serine biosynthesis; L-serine from 3-phospho-D-glycerate: step 2/3. Its pathway is cofactor biosynthesis; pyridoxine 5'-phosphate biosynthesis; pyridoxine 5'-phosphate from D-erythrose 4-phosphate: step 3/5. Its function is as follows. Catalyzes the reversible conversion of 3-phosphohydroxypyruvate to phosphoserine and of 3-hydroxy-2-oxo-4-phosphonooxybutanoate to phosphohydroxythreonine. The protein is Phosphoserine aminotransferase of Haemophilus ducreyi (strain 35000HP / ATCC 700724).